The following is a 132-amino-acid chain: Small ribosomal subunit protein uS8c (132 aa).

The protein belongs to the universal ribosomal protein uS8 family. In terms of assembly, part of the 30S ribosomal subunit.

The protein resides in the plastid. It localises to the chloroplast. Its function is as follows. One of the primary rRNA binding proteins, it binds directly to 16S rRNA central domain where it helps coordinate assembly of the platform of the 30S subunit. This chain is Small ribosomal subunit protein uS8c (rps8), found in Thalassiosira pseudonana (Marine diatom).